Here is a 247-residue protein sequence, read N- to C-terminus: Bax inhibitor 1 (247 aa).

At methionine 1 the chain carries N-acetylmethionine. 6 helical membrane-spanning segments follow: residues 58–78 (VLWNIGGILTTIGCIGTMIWL), 92–112 (LLFVSAVLEGASVGPLIKVAI), 118–138 (ILITAFVGTAIAFVCFSAAAM), 145–165 (YLYLGGLLSSGLSMLMWLQFA), 173–193 (ASIFKFELYFGLLIFVGYMVV), and 212–232 (HSLTLFTDFVAVFVRILIIML).

It belongs to the BI1 family. In terms of assembly, interacts (via C-terminus) with calmodulin, CYTB5-B and CYTB5-D. Interacts indirectly with FAH1 via CYTB5-D. In terms of tissue distribution, expressed in root tips, root vasculature, flower tissues, including stamens and sepals, and in the base of siliques. Not detected in mature leaves.

The protein resides in the endoplasmic reticulum membrane. Its function is as follows. Suppressor of apoptosis. Modulator of endoplasmic reticulum stress-mediated programmed cell death. Involved in methyl jasmonate-induced leaf senescence through regulating cytoplasmic calcium level. This Arabidopsis thaliana (Mouse-ear cress) protein is Bax inhibitor 1 (BI-1).